The following is a 335-amino-acid chain: Glycerol-3-phosphate dehydrogenase [NAD(P)+] (335 aa).

The NADPH site is built by Ser10, Phe11, Arg31, and Lys105. Residues Lys105, Gly136, and Ser138 each contribute to the sn-glycerol 3-phosphate site. Residue Ala140 coordinates NADPH. 5 residues coordinate sn-glycerol 3-phosphate: Lys191, Asp244, Ser254, Arg255, and Asn256. The active-site Proton acceptor is the Lys191. Arg255 serves as a coordination point for NADPH. NADPH contacts are provided by Val279 and Glu281.

This sequence belongs to the NAD-dependent glycerol-3-phosphate dehydrogenase family.

Its subcellular location is the cytoplasm. The catalysed reaction is sn-glycerol 3-phosphate + NAD(+) = dihydroxyacetone phosphate + NADH + H(+). The enzyme catalyses sn-glycerol 3-phosphate + NADP(+) = dihydroxyacetone phosphate + NADPH + H(+). It participates in membrane lipid metabolism; glycerophospholipid metabolism. Catalyzes the reduction of the glycolytic intermediate dihydroxyacetone phosphate (DHAP) to sn-glycerol 3-phosphate (G3P), the key precursor for phospholipid synthesis. This Leptospira interrogans serogroup Icterohaemorrhagiae serovar Lai (strain 56601) protein is Glycerol-3-phosphate dehydrogenase [NAD(P)+].